The primary structure comprises 67 residues: Large ribosomal subunit protein bL31c (67 aa).

The protein belongs to the bacterial ribosomal protein bL31 family. Type A subfamily. As to quaternary structure, part of the 50S ribosomal subunit.

The protein resides in the plastid. It is found in the chloroplast. Functionally, binds the 23S rRNA. The sequence is that of Large ribosomal subunit protein bL31c (rpl31) from Cyanidioschyzon merolae (strain NIES-3377 / 10D) (Unicellular red alga).